The primary structure comprises 1209 residues: ATP-dependent helicase/nuclease subunit A (1209 aa).

A UvrD-like helicase ATP-binding domain is found at Ser9 to Arg482. Ala30–Thr37 provides a ligand contact to ATP. The UvrD-like helicase C-terminal domain occupies Ala510–Gly798.

Belongs to the helicase family. AddA subfamily. As to quaternary structure, heterodimer of AddA and AddB/RexB. The cofactor is Mg(2+).

The catalysed reaction is Couples ATP hydrolysis with the unwinding of duplex DNA by translocating in the 3'-5' direction.. The enzyme catalyses ATP + H2O = ADP + phosphate + H(+). In terms of biological role, the heterodimer acts as both an ATP-dependent DNA helicase and an ATP-dependent, dual-direction single-stranded exonuclease. Recognizes the chi site generating a DNA molecule suitable for the initiation of homologous recombination. The AddA nuclease domain is required for chi fragment generation; this subunit has the helicase and 3' -&gt; 5' nuclease activities. This Anoxybacillus flavithermus (strain DSM 21510 / WK1) protein is ATP-dependent helicase/nuclease subunit A.